Reading from the N-terminus, the 440-residue chain is O-glycoside alpha-1,2-mannosyltransferase homolog 4 (440 aa).

At 1–35 the chain is on the cytoplasmic side; it reads MLGWNKHVFFSESRINFRCLLRKKLKKRCPLSARF. The helical; Signal-anchor for type II membrane protein transmembrane segment at 36–56 threads the bilayer; the sequence is VLVLLLIVLIFILKMGYKQLI. Topologically, residues 57–440 are lumenal; the sequence is YKLNHPPLRR…NLIGDGFLDE (384 aa). Glutamate 336 serves as the catalytic Nucleophile.

This sequence belongs to the glycosyltransferase 15 family.

It is found in the cytoplasm. The protein resides in the nucleus. It localises to the golgi apparatus membrane. In terms of biological role, probable mannosyltransferase involved in O-glycosylation of cell wall and secreted proteins. Transfers an alpha-D-mannosyl residue from GDP-mannose into lipid-linked oligosaccharide, forming an alpha-(1-&gt;2)-D-mannosyl-D-mannose linkage. The polypeptide is O-glycoside alpha-1,2-mannosyltransferase homolog 4 (omh4) (Schizosaccharomyces pombe (strain 972 / ATCC 24843) (Fission yeast)).